Reading from the N-terminus, the 35-residue chain is MRKSYEVGISPKINLCNSVEVLTNSFGTVISGRQV.

This chain is Protein YbgU, found in Escherichia coli (strain K12).